The chain runs to 536 residues: Probable galacturonosyltransferase 10 (536 aa).

The Cytoplasmic segment spans residues 1–16; sequence MRRRGGDSFRRAGRRK. Residues 17 to 37 traverse the membrane as a helical; Signal-anchor for type II membrane protein segment; the sequence is ISNVVWWVLSGIALLLFFLIL. The Lumenal segment spans residues 38–536; it reads SKAGHIEPRP…SPFMQQCNFH (499 aa). 5 N-linked (GlcNAc...) asparagine glycosylation sites follow: Asn-64, Asn-246, Asn-300, Asn-403, and Asn-436.

This sequence belongs to the glycosyltransferase 8 family. Expressed in roots, inflorescences, siliques, leaves and stems.

It localises to the golgi apparatus membrane. Its pathway is glycan metabolism; pectin biosynthesis. Its function is as follows. May be involved in pectin and/or xylans biosynthesis in cell walls. In Arabidopsis thaliana (Mouse-ear cress), this protein is Probable galacturonosyltransferase 10 (GAUT10).